We begin with the raw amino-acid sequence, 248 residues long: 4-hydroxy-tetrahydrodipicolinate reductase (248 aa).

NAD(+) is bound by residues 8 to 13 (GAKGRV), aspartate 34, 76 to 78 (GTT), and 103 to 106 (APNF). Histidine 133 serves as the catalytic Proton donor/acceptor. Histidine 134 contributes to the (S)-2,3,4,5-tetrahydrodipicolinate binding site. The active-site Proton donor is the lysine 137. Residue 143-144 (GT) participates in (S)-2,3,4,5-tetrahydrodipicolinate binding.

The protein belongs to the DapB family.

The protein resides in the cytoplasm. The catalysed reaction is (S)-2,3,4,5-tetrahydrodipicolinate + NAD(+) + H2O = (2S,4S)-4-hydroxy-2,3,4,5-tetrahydrodipicolinate + NADH + H(+). It catalyses the reaction (S)-2,3,4,5-tetrahydrodipicolinate + NADP(+) + H2O = (2S,4S)-4-hydroxy-2,3,4,5-tetrahydrodipicolinate + NADPH + H(+). It functions in the pathway amino-acid biosynthesis; L-lysine biosynthesis via DAP pathway; (S)-tetrahydrodipicolinate from L-aspartate: step 4/4. Functionally, catalyzes the conversion of 4-hydroxy-tetrahydrodipicolinate (HTPA) to tetrahydrodipicolinate. The sequence is that of 4-hydroxy-tetrahydrodipicolinate reductase from Corynebacterium urealyticum (strain ATCC 43042 / DSM 7109).